A 793-amino-acid polypeptide reads, in one-letter code: Putative dipeptidyl aminopeptidase C2E11.08 (793 aa).

At 1-24 (MNDFSFEDKGLISRSGFGSRHVRR) the chain is on the cytoplasmic side. The chain crosses the membrane as a helical; Signal-anchor for type II membrane protein span at residues 25–45 (VVKALALIFSLLILYLTISNV). Over 46–793 (SDSPPKRDSL…STGVRQHRWD (748 aa)) the chain is Lumenal. N-linked (GlcNAc...) asparagine glycosylation is found at asparagine 101, asparagine 136, asparagine 246, asparagine 299, asparagine 303, asparagine 324, asparagine 336, asparagine 377, asparagine 384, asparagine 407, and asparagine 535. Catalysis depends on charge relay system residues serine 647, aspartate 722, and histidine 755. N-linked (GlcNAc...) asparagine glycosylation is present at asparagine 761.

It belongs to the peptidase S9B family.

The protein resides in the vacuole membrane. This chain is Putative dipeptidyl aminopeptidase C2E11.08, found in Schizosaccharomyces pombe (strain 972 / ATCC 24843) (Fission yeast).